A 143-amino-acid chain; its full sequence is Flagellar assembly factor FliW (143 aa).

It belongs to the FliW family. In terms of assembly, interacts with flagellin in a 1:1 complex. Two molecules interact with each CsrA dimer; cannot interact with both flagellin and CsrA simultaneously. Has a higher affinity for CsrA than for flagellin. Interacts directly with flagellin (hag), forms a 3-way complex of Hag, FliS and FliW in which Flis and FliW do not directly interact. Interaction with Hag may occur via the C-terminus of Hag.

Its subcellular location is the cytoplasm. Functionally, acts as an anti-CsrA protein, binds CsrA and prevents it from repressing translation of its target genes, one of which is flagellin. Binds to flagellin (hag), which is implicated in polymerization, and participates in the assembly of the flagellum. An antagonist to translational regulator CsrA, it binds CsrA at an allosteric site and non-competitively inhibits CsrA binding to hag RNA. Partner switching by flagellin between FliW and CsrA provides a flagellar assembly checkpoint to tightly control the timing of flagellin synthesis. Flagellin binds to assembly factor FliW, freeing translation regulator CsrA to repress translation of the flagellin mRNA. When the flagellar hook is assembled flagellin is secreted, depleting intracellular flagellin, which frees FliW to interact with CsrA and inhibits CsrA binding to mRNA. This derepresses flagellin translation and provides protein for flagellar assembly. Once the flagellar filament is completed cytoplasmic flagellin levels rise and CsrA translation repression of flagellin reinitiates. Binds to CsrA and displaces it from hag mRNA. Binds to hag mRNA itself, but only at much higher concentrations than those required to displace CsrA. The sequence is that of Flagellar assembly factor FliW from Bacillus subtilis (strain 168).